Consider the following 441-residue polypeptide: Protein C-ets-1 (441 aa).

Residues Lys8 and Lys15 each carry the N6-acetyllysine; alternate modification. Residues Lys8 and Lys15 each participate in a glycyl lysine isopeptide (Lys-Gly) (interchain with G-Cter in SUMO2); alternate cross-link. Residue Lys15 forms a Glycyl lysine isopeptide (Lys-Gly) (interchain with G-Cter in SUMO); alternate linkage. Residue Thr38 is modified to Phosphothreonine; by MAPK. Residues Ala51 to Asp136 enclose the PNT domain. The segment at Glu130–Arg243 is activation domain; required for transcription activation. A Glycyl lysine isopeptide (Lys-Gly) (interchain with G-Cter in SUMO2) cross-link involves residue Lys138. Tyr223 is modified (phosphotyrosine). A Glycyl lysine isopeptide (Lys-Gly) (interchain with G-Cter in SUMO) cross-link involves residue Lys227. Phosphoserine occurs at positions 251 and 254. Thr265 bears the Phosphothreonine mark. A phosphoserine mark is found at Ser267, Ser270, Ser282, and Ser285. Positions Phe304–Ala312 are helix HI-1. Residue Lys305 is modified to N6-acetyllysine. The interval Ala323–Thr330 is helix HI-2. The segment at residues Ile335–Val415 is a DNA-binding region (ETS). Residues Leu418–Leu422 form a helix H4 region. Residues Pro426–Met432 form a helix H5 region.

The protein belongs to the ETS family. In terms of assembly, binds DNA as a homodimer; homodimerization is required for transcription activation. Interacts with MAF and MAFB. Interacts with PAX5; the interaction alters DNA-binding properties. Interacts with DAXX. Interacts with UBE2I. Interacts with SP100; the interaction is direct and modulates ETS1 transcriptional activity. Sumoylated on Lys-15 and Lys-227, preferentially with SUMO2; which inhibits transcriptional activity. Post-translationally, ubiquitinated; which induces proteasomal degradation. In terms of processing, phosphorylation at Ser-251, Ser-282 and Ser-285 by CaMK2/CaMKII in response to calcium signaling decreases affinity for DNA: an increasing number of phosphoserines causes DNA-binding to become progressively weaker.

The protein resides in the nucleus. Its subcellular location is the cytoplasm. Autoinhibited by a module composed of four alpha helices (HI-1, HI-2, H4, and H5) that flank the DNA-binding ETS domain, reducing the affinity for DNA. Phosphorylation by CaMK2/CaMKII in response to calcium signaling decreases affinity for DNA. Functionally, transcription factor. Directly controls the expression of cytokine and chemokine genes in a wide variety of different cellular contexts. May control the differentiation, survival and proliferation of lymphoid cells. May also regulate angiogenesis through regulation of expression of genes controlling endothelial cell migration and invasion. In Rattus norvegicus (Rat), this protein is Protein C-ets-1 (Ets1).